The following is a 402-amino-acid chain: UDP-glucose 6-dehydrogenase (402 aa).

NAD(+) is bound by residues 2–19, valine 11, aspartate 29, lysine 34, threonine 83, threonine 118, and glutamate 145; that span reads KIAVAGSGYVGLSLGVLL. Substrate is bound by residues 141–145, lysine 204, asparagine 208, 249–253, and glycine 257; these read EFLRE and YNNPS. Tyrosine 259 serves as a coordination point for NAD(+). The Nucleophile role is filled by cysteine 260. Residue lysine 263 participates in NAD(+) binding. Lysine 320 contributes to the substrate binding site. NAD(+) is bound at residue arginine 327.

This sequence belongs to the UDP-glucose/GDP-mannose dehydrogenase family.

The catalysed reaction is UDP-alpha-D-glucose + 2 NAD(+) + H2O = UDP-alpha-D-glucuronate + 2 NADH + 3 H(+). It functions in the pathway nucleotide-sugar biosynthesis; UDP-alpha-D-glucuronate biosynthesis; UDP-alpha-D-glucuronate from UDP-alpha-D-glucose: step 1/1. Functionally, catalyzes the formation of UDP-glucuronic acid which is required for capsular hyaluronic acid synthesis. This Streptococcus pyogenes serotype M18 (strain MGAS8232) protein is UDP-glucose 6-dehydrogenase (hasB).